The following is a 350-amino-acid chain: Protein memo-1 homolog (350 aa).

It belongs to the MEMO1 family. As to quaternary structure, interacts with rho-1. As to expression, expressed in neuronal and non-neuronal cells in the head and tail, pharyngeal cells, spermatheca, distal tip cells, anchor cell and the intestine.

Functionally, plays a role in the oxidative stress response and the maintenance of longevity by regulating the interaction between GTPase rho-1 and oxidase bli-3. In turn, this serves to modulate bli-3 activity and the control of reactive oxygen species production. May control cell migration by relaying extracellular chemotactic signals to the microtubule cytoskeleton. The protein is Protein memo-1 homolog of Caenorhabditis elegans.